The sequence spans 116 residues: NADH-ubiquinone oxidoreductase chain 3 (116 aa).

The next 3 helical transmembrane spans lie at 3–23 (LILA…MIAF), 56–76 (FFLV…LLPL), and 85–105 (PTLA…GLIH).

Belongs to the complex I subunit 3 family.

Its subcellular location is the mitochondrion membrane. It carries out the reaction a ubiquinone + NADH + 5 H(+)(in) = a ubiquinol + NAD(+) + 4 H(+)(out). In terms of biological role, core subunit of the mitochondrial membrane respiratory chain NADH dehydrogenase (Complex I) that is believed to belong to the minimal assembly required for catalysis. Complex I functions in the transfer of electrons from NADH to the respiratory chain. The immediate electron acceptor for the enzyme is believed to be ubiquinone. In Latimeria chalumnae (Coelacanth), this protein is NADH-ubiquinone oxidoreductase chain 3 (MT-ND3).